A 216-amino-acid polypeptide reads, in one-letter code: Uracil phosphoribosyltransferase (216 aa).

Lys-30–Arg-34 lines the GTP pocket. Residues Arg-80, Arg-105, and Asp-140–Thr-148 each bind 5-phospho-alpha-D-ribose 1-diphosphate. Uracil contacts are provided by residues Ile-203 and Gly-208–Ala-210. Asp-209 is a 5-phospho-alpha-D-ribose 1-diphosphate binding site.

Belongs to the UPRTase family. The cofactor is Mg(2+).

It carries out the reaction UMP + diphosphate = 5-phospho-alpha-D-ribose 1-diphosphate + uracil. The protein operates within pyrimidine metabolism; UMP biosynthesis via salvage pathway; UMP from uracil: step 1/1. Allosterically activated by GTP. Functionally, catalyzes the conversion of uracil and 5-phospho-alpha-D-ribose 1-diphosphate (PRPP) to UMP and diphosphate. This chain is Uracil phosphoribosyltransferase, found in Saccharolobus islandicus (strain Y.N.15.51 / Yellowstone #2) (Sulfolobus islandicus).